We begin with the raw amino-acid sequence, 211 residues long: Thiamine-phosphate synthase (211 aa).

4-amino-2-methyl-5-(diphosphooxymethyl)pyrimidine is bound by residues 37 to 41 and Asn69; that span reads QLRIK. Residues Asp70 and Asp89 each coordinate Mg(2+). Ser108 contacts 4-amino-2-methyl-5-(diphosphooxymethyl)pyrimidine. Residue 134 to 136 coordinates 2-[(2R,5Z)-2-carboxy-4-methylthiazol-5(2H)-ylidene]ethyl phosphate; the sequence is TQT. Lys137 contacts 4-amino-2-methyl-5-(diphosphooxymethyl)pyrimidine. 2-[(2R,5Z)-2-carboxy-4-methylthiazol-5(2H)-ylidene]ethyl phosphate is bound by residues Gly166 and 186–187; that span reads VS.

The protein belongs to the thiamine-phosphate synthase family. The cofactor is Mg(2+).

The catalysed reaction is 2-[(2R,5Z)-2-carboxy-4-methylthiazol-5(2H)-ylidene]ethyl phosphate + 4-amino-2-methyl-5-(diphosphooxymethyl)pyrimidine + 2 H(+) = thiamine phosphate + CO2 + diphosphate. It carries out the reaction 2-(2-carboxy-4-methylthiazol-5-yl)ethyl phosphate + 4-amino-2-methyl-5-(diphosphooxymethyl)pyrimidine + 2 H(+) = thiamine phosphate + CO2 + diphosphate. It catalyses the reaction 4-methyl-5-(2-phosphooxyethyl)-thiazole + 4-amino-2-methyl-5-(diphosphooxymethyl)pyrimidine + H(+) = thiamine phosphate + diphosphate. It functions in the pathway cofactor biosynthesis; thiamine diphosphate biosynthesis; thiamine phosphate from 4-amino-2-methyl-5-diphosphomethylpyrimidine and 4-methyl-5-(2-phosphoethyl)-thiazole: step 1/1. Functionally, condenses 4-methyl-5-(beta-hydroxyethyl)thiazole monophosphate (THZ-P) and 2-methyl-4-amino-5-hydroxymethyl pyrimidine pyrophosphate (HMP-PP) to form thiamine monophosphate (TMP). This chain is Thiamine-phosphate synthase, found in Salmonella typhimurium (strain LT2 / SGSC1412 / ATCC 700720).